Consider the following 427-residue polypeptide: Enolase (427 aa).

Glutamine 163 contributes to the (2R)-2-phosphoglycerate binding site. Glutamate 205 acts as the Proton donor in catalysis. The Mg(2+) site is built by aspartate 242, glutamate 285, and aspartate 312. Residues lysine 337, arginine 366, serine 367, and lysine 388 each contribute to the (2R)-2-phosphoglycerate site. The Proton acceptor role is filled by lysine 337.

The protein belongs to the enolase family. Mg(2+) serves as cofactor.

The protein resides in the cytoplasm. The protein localises to the secreted. It localises to the cell surface. The enzyme catalyses (2R)-2-phosphoglycerate = phosphoenolpyruvate + H2O. It functions in the pathway carbohydrate degradation; glycolysis; pyruvate from D-glyceraldehyde 3-phosphate: step 4/5. Its function is as follows. Catalyzes the reversible conversion of 2-phosphoglycerate (2-PG) into phosphoenolpyruvate (PEP). It is essential for the degradation of carbohydrates via glycolysis. The protein is Enolase of Paraburkholderia xenovorans (strain LB400).